We begin with the raw amino-acid sequence, 792 residues long: Cullin-4 (792 aa).

Residues 1–10 (MSLPTKRSTF) show a composition bias toward polar residues. A disordered region spans residues 1 to 43 (MSLPTKRSTFSAASASDDSSYSSPPMKKAKNDLHHSPQHPNTA). A compositionally biased stretch (low complexity) spans 11–23 (SAASASDDSSYSS). The region spanning 724–784 (DRQYQIDAAI…REYLEREKSN (61 aa)) is the Cullin neddylation domain. K738 participates in a covalent cross-link: Glycyl lysine isopeptide (Lys-Gly) (interchain with G-Cter in NEDD8).

Belongs to the cullin family. In terms of assembly, interacts with COP10, CSN3, CSN4, CSN5, CSN8, DDB1A, DDB1B, DDB2, DET1 and RBX1. Post-translationally, neddylated (rubylated). Deneddylated via its interaction with the COP9 signalosome (CSN) complex. In terms of tissue distribution, ubiquitous.

The protein resides in the nucleus. It participates in protein modification; protein ubiquitination. In terms of biological role, component of the CUL4-RBX1-CDD (COP10-DDB1a-DET1) E3 ubiquitin-protein ligase complex which mediates the ubiquitination and subsequent proteasomal degradation of target proteins. Participates in the CDD complex to light-mediated control of development. May repress photomorphogenesis through enhancing COP1 E3 ubiquitin-protein ligase activity. Acts together with the CUL4-DDB1-COP1-SPA E3 ubiquitin-protein ligase complexes in the repression of photomorphogenesis and flowering time. Component ot the CUL4-RBX1-DDB1-PRL1 E3 ubiquitin-protein ligase complex which mediates ubiquitination and subsequent degradation of AKIN10. Component of the CUL4-RBX1-DDB1-DWA1/DWA2 E3 ubiquitin-protein ligase complex that acts as a negative regulator in abscisic acid (ABA) signaling and may target ABI5 for degradation. In Arabidopsis thaliana (Mouse-ear cress), this protein is Cullin-4 (CUL4).